Reading from the N-terminus, the 505-residue chain is Flagellin (505 aa).

The protein belongs to the bacterial flagellin family.

It is found in the secreted. The protein resides in the bacterial flagellum. In terms of biological role, flagellin is the subunit protein which polymerizes to form the filaments of bacterial flagella. The chain is Flagellin (fliC) from Salmonella montevideo.